The chain runs to 189 residues: Stathmin-4 (189 aa).

Residues Cys-20 and Cys-22 are each lipidated (S-palmitoyl cysteine). Positions 48–189 constitute an SLD domain; sequence SDMEVIELNK…NKELKEEASR (142 aa). Ser-90 carries the post-translational modification Phosphoserine. A coiled-coil region spans residues 90–188; sequence SLEEIQKKLE…KNKELKEEAS (99 aa). The disordered stretch occupies residues 168–189; that stretch reads QEKDKHAEEVRKNKELKEEASR.

The protein belongs to the stathmin family.

The protein resides in the golgi apparatus. Its subcellular location is the cell projection. The protein localises to the growth cone. It localises to the axon. Its function is as follows. Exhibits microtubule-destabilizing activity. The chain is Stathmin-4 (STMN4) from Homo sapiens (Human).